A 117-amino-acid polypeptide reads, in one-letter code: Large ribosomal subunit protein eL22 (117 aa).

Phosphoserine occurs at positions 49 and 50.

The protein belongs to the eukaryotic ribosomal protein eL22 family. As to quaternary structure, component of the large ribosomal subunit (LSU). Mature yeast ribosomes consist of a small (40S) and a large (60S) subunit. The 40S small subunit contains 1 molecule of ribosomal RNA (18S rRNA) and at least 33 different proteins. The large 60S subunit contains 3 rRNA molecules (25S, 5.8S and 5S rRNA) and at least 46 different proteins.

The protein resides in the cytoplasm. Its subcellular location is the nucleus. It is found in the nucleolus. Its function is as follows. Component of the ribosome, a large ribonucleoprotein complex responsible for the synthesis of proteins in the cell. The small ribosomal subunit (SSU) binds messenger RNAs (mRNAs) and translates the encoded message by selecting cognate aminoacyl-transfer RNA (tRNA) molecules. The large subunit (LSU) contains the ribosomal catalytic site termed the peptidyl transferase center (PTC), which catalyzes the formation of peptide bonds, thereby polymerizing the amino acids delivered by tRNAs into a polypeptide chain. The nascent polypeptides leave the ribosome through a tunnel in the LSU and interact with protein factors that function in enzymatic processing, targeting, and the membrane insertion of nascent chains at the exit of the ribosomal tunnel. The chain is Large ribosomal subunit protein eL22 (rpl22) from Schizosaccharomyces pombe (strain 972 / ATCC 24843) (Fission yeast).